The sequence spans 179 residues: Large ribosomal subunit protein uL10 (179 aa).

This sequence belongs to the universal ribosomal protein uL10 family. In terms of assembly, part of the ribosomal stalk of the 50S ribosomal subunit. The N-terminus interacts with L11 and the large rRNA to form the base of the stalk. The C-terminus forms an elongated spine to which L12 dimers bind in a sequential fashion forming a multimeric L10(L12)X complex.

Its function is as follows. Forms part of the ribosomal stalk, playing a central role in the interaction of the ribosome with GTP-bound translation factors. This chain is Large ribosomal subunit protein uL10, found in Symbiobacterium thermophilum (strain DSM 24528 / JCM 14929 / IAM 14863 / T).